A 187-amino-acid polypeptide reads, in one-letter code: UPF0301 protein Sputcn32_2681 (187 aa).

Belongs to the UPF0301 (AlgH) family.

The chain is UPF0301 protein Sputcn32_2681 from Shewanella putrefaciens (strain CN-32 / ATCC BAA-453).